A 104-amino-acid polypeptide reads, in one-letter code: Naphthalene 1,2-dioxygenase system, ferredoxin component (104 aa).

The Rieske domain occupies 6 to 101; that stretch reads IDAVALYEIP…VKIEGQRVMI (96 aa). 4 residues coordinate [2Fe-2S] cluster: C45, H47, C64, and H67.

It belongs to the bacterial ring-hydroxylating dioxygenase ferredoxin component family. The naphthalene dioxygenase (NDO) multicomponent enzyme system is composed of an electron transfer component and a dioxygenase component (iron sulfur protein (ISP)). The electron transfer component is composed of a ferredoxin reductase (NdoR) and a ferredoxin (NdoA), and the dioxygenase component is formed of a heterohexamer (trimer of heterodimers) of three large alpha subunits (NdoB) and three small beta subunits (NdoC). [2Fe-2S] cluster serves as cofactor.

Its pathway is aromatic compound metabolism; naphthalene degradation. Functionally, component of the naphthalene dioxygenase (NDO) multicomponent enzyme system which catalyzes the incorporation of both atoms of molecular oxygen into naphthalene to form cis-(1R,2S)-dihydroxy-1,2-dihydronaphthalene. Functions as an intermediate electron transfer protein via a specific interaction with iron sulfur protein components (ISP) (NdoB and NdoC). The sequence is that of Naphthalene 1,2-dioxygenase system, ferredoxin component from Pseudomonas aeruginosa.